Reading from the N-terminus, the 1022-residue chain is MTGKVNRDLFFKLASDLREERLHAAVALIKDLSALDLPDDAEEWSYVLNRLIKGLSSDRNSARLGFSLCLTEVINLAVNMPPGQRPKGLESTNEFLSTLSTILNVNVNEGTKKSMKGKDERGILFGKLFGLKSLLNEPLFSEIFVKDLEKGNTEFFIRFTEQLIDLALKKNWIKEPCFFTLFQTMKMLLPFMDESSAEKILLIYDKYDLTLTNEGLSTYLLLKYEGDESLIPSVLDLKNPGWKDNDPLARGNLPLLTKVLRNSSVIPDANGGLKETKKQKNTNWNPRLHFVWSVLLPLFGNGKLENTSHISKKRKKTNNKKVQNSIQFPEFWKMAVDESFFNEKASSERKYLGFLIIDAAFKAVPGSYIGFCFSQNVMRTLINQSIDSQRVLNKISQLTLDSIVKACEEDSANRLVPCLNAMLFGPHGSINFDKLTKSGTVSKLIAIKELPSTVLAQLLDVFFLQLQDKKGVLSHTLFALDSILHIVRAHKVEINDMDIMKPVLRPIVYMAFFKHTSDDLKLEQLHELAKERLYSILGELTINKEIRCKDPEINSWQYLTLKLILDIENSHVGDLINPLDENLENIKNEAISCLSKVCRSRTAQSWGLSTLLSMCLVQLYAGDTDSISVIEELCEFSKHENNSMVGITEILLSLLAQKKALLRKLSLIIWQQFIEEVGLEELQILLDILKARENKQGFAQLFEGEEEFEEIKEENDASEDESKTGSESESESESDSDDADEKDEEDEANEDILNIDKEATSALVKALNLPDNIVNDKGEVDLDQLEGLSDDGGDDEDEESMDDEKMMELDDQLSEIFKRRKEALSSISTGNQRKFEVKQSRENVISFKHRVVDMLAVYVKYCEKLTLANKSEHSNNLGGSLSKLVYFIIPMLKCVNETLDRPLADKISKLLKGKIFKIKVTAFKDMNKDIELMDLLKKTHKLMLTSKPGQHAAVFYSMCSTSSLFLSKLYVEIGGNDKLDELIDLYTATTKEWMQKGKCGPNIFIDFINWLSSKKQTVMDKE.

Composition is skewed to acidic residues over residues 706–719 (EEFE…DASE), 728–748 (SESE…EDEA), and 781–802 (DLDQ…ESMD). Disordered regions lie at residues 706–748 (EEFE…EDEA) and 778–805 (GEVD…DDEK). Ser789 is modified (phosphoserine).

This sequence belongs to the MYBBP1A family. In terms of assembly, interacts with FRK1.

It is found in the nucleus. It localises to the nucleolus. It carries out the reaction DNA(n) + a 2'-deoxyribonucleoside 5'-triphosphate = DNA(n+1) + diphosphate. With respect to regulation, stimulated by PCNA and inhibited by aphidicolin. Plays an important role in the regulation of rRNA transcription. Binds near or at the enhancer region of rRNA repeating units. May have DNA polymerase activity, but it is not required for in vivo function. The polypeptide is rDNA transcriptional regulator POL5 (Saccharomyces cerevisiae (strain ATCC 204508 / S288c) (Baker's yeast)).